Consider the following 245-residue polypeptide: Ribonuclease 3 (245 aa).

The RNase III domain maps to 19–148 (FKLFQEKIGI…FIGALYLDQG (130 aa)). A Mg(2+)-binding site is contributed by Glu-61. Asp-65 is a catalytic residue. The Mg(2+) site is built by Asp-134 and Glu-137. Residue Glu-137 is part of the active site. The DRBM domain maps to 174-243 (DYKSQLQELI…AAEALKKLKE (70 aa)).

Belongs to the ribonuclease III family. As to quaternary structure, homodimer. Mg(2+) serves as cofactor.

Its subcellular location is the cytoplasm. It carries out the reaction Endonucleolytic cleavage to 5'-phosphomonoester.. Its function is as follows. Digests double-stranded RNA. Involved in the processing of primary rRNA transcript to yield the immediate precursors to the large and small rRNAs (23S and 16S). Processes some mRNAs, and tRNAs when they are encoded in the rRNA operon. Processes pre-crRNA and tracrRNA of type II CRISPR loci if present in the organism. This is Ribonuclease 3 from Bacillus cereus (strain 03BB102).